We begin with the raw amino-acid sequence, 1411 residues long: Uveal autoantigen with coiled-coil domains and ankyrin repeats (1411 aa).

Position 1 is an N-acetylmethionine (M1). The segment at 1 to 30 (MKSLKSRLWKQDAPGPTSPSSPTAVASTQS) is disordered. Over residues 13 to 30 (APGPTSPSSPTAVASTQS) the composition is skewed to low complexity. ANK repeat units lie at residues 69-98 (EGRS…DVAT), 102-131 (AGRN…PTEH), 135-164 (QGRT…SVNA), 168-197 (DGRT…DVNS), 201-230 (QNRT…DLTL), and 234-263 (LGHD…NTNK). A disordered region spans residues 263–301 (KGRELWRKGPPLQQRNLSHTQDEGSVKSTQREQREPHSF). The residue at position 280 (S280) is a Phosphoserine. Basic and acidic residues predominate over residues 282–301 (TQDEGSVKSTQREQREPHSF). Coiled-coil stretches lie at residues 299–379 (HSFQ…NRFK), 442–624 (SENE…LKEL), and 652–1380 (VKRL…AIYR). Positions 1006–1031 (GLKEQLSEQTHKCRQRDEEVKKGKQE) are disordered.

In terms of assembly, component of the apoptosome complex, composed of APAF1, pro-caspase-9 and UACA. In the complex, it probably interacts directly with APAF1. Interacts with LGALS3, ARF6 and ACTB. Interacts with RAB39A. Highly expressed in heart, liver, kidney and testis. Weakly expressed in lung and skeletal muscle. Not expressed in brain and spleen.

It localises to the nucleus. The protein resides in the cytoplasm. It is found in the cytoskeleton. Regulates APAF1 expression and plays an important role in the regulation of stress-induced apoptosis. Promotes apoptosis by regulating three pathways, apoptosome up-regulation, LGALS3/galectin-3 down-regulation and NF-kappa-B inactivation. Regulates the redistribution of APAF1 into the nucleus after proapoptotic stress. Down-regulates the expression of LGALS3 by inhibiting NFKB1. Its function is as follows. Modulates isoactin dynamics to regulate the morphological alterations required for cell growth and motility. Interaction with ARF6 may modulate cell shape and motility after injury. May be involved in multiple neurite formation. The sequence is that of Uveal autoantigen with coiled-coil domains and ankyrin repeats (Uaca) from Mus musculus (Mouse).